A 276-amino-acid chain; its full sequence is Light-independent protochlorophyllide reductase iron-sulfur ATP-binding protein (276 aa).

ATP-binding positions include 12–17 (GIGKST) and Lys41. Ser16 contributes to the Mg(2+) binding site. [4Fe-4S] cluster-binding residues include Cys97 and Cys131. Position 182-183 (182-183 (NR)) interacts with ATP.

The protein belongs to the NifH/BchL/ChlL family. In terms of assembly, homodimer. Protochlorophyllide reductase is composed of three subunits; BchL, BchN and BchB. The cofactor is [4Fe-4S] cluster.

It carries out the reaction chlorophyllide a + oxidized 2[4Fe-4S]-[ferredoxin] + 2 ADP + 2 phosphate = protochlorophyllide a + reduced 2[4Fe-4S]-[ferredoxin] + 2 ATP + 2 H2O. Its pathway is porphyrin-containing compound metabolism; bacteriochlorophyll biosynthesis (light-independent). Functionally, component of the dark-operative protochlorophyllide reductase (DPOR) that uses Mg-ATP and reduced ferredoxin to reduce ring D of protochlorophyllide (Pchlide) to form chlorophyllide a (Chlide). This reaction is light-independent. The L component serves as a unique electron donor to the NB-component of the complex, and binds Mg-ATP. The sequence is that of Light-independent protochlorophyllide reductase iron-sulfur ATP-binding protein from Chlorobium chlorochromatii (strain CaD3).